The chain runs to 508 residues: 4-trimethylaminobutyraldehyde dehydrogenase A (508 aa).

NAD(+) contacts are provided by residues Lys-194 and 246–250; that span reads GSVPT. Residue Glu-268 is the Proton acceptor of the active site. Cys-302 functions as the Nucleophile in the catalytic mechanism. Position 405 (Glu-405) interacts with NAD(+).

This sequence belongs to the aldehyde dehydrogenase family. In terms of assembly, homotetramer.

Its subcellular location is the cytoplasm. It localises to the cytosol. It catalyses the reaction 4-(trimethylamino)butanal + NAD(+) + H2O = 4-(trimethylamino)butanoate + NADH + 2 H(+). The enzyme catalyses an aldehyde + NAD(+) + H2O = a carboxylate + NADH + 2 H(+). It participates in amine and polyamine biosynthesis; carnitine biosynthesis. In terms of biological role, converts gamma-trimethylaminobutyraldehyde into gamma-butyrobetaine with high efficiency (in vitro). Can catalyze the irreversible oxidation of a broad range of aldehydes to the corresponding acids in an NAD-dependent reaction, but with low efficiency. This chain is 4-trimethylaminobutyraldehyde dehydrogenase A (aldh9a1a), found in Danio rerio (Zebrafish).